The chain runs to 210 residues: Thiamine-phosphate synthase (210 aa).

Residues 34-38 (QLRHK) and asparagine 66 each bind 4-amino-2-methyl-5-(diphosphooxymethyl)pyrimidine. Mg(2+)-binding residues include aspartate 67 and aspartate 86. Serine 105 serves as a coordination point for 4-amino-2-methyl-5-(diphosphooxymethyl)pyrimidine. 131 to 133 (TSS) is a 2-[(2R,5Z)-2-carboxy-4-methylthiazol-5(2H)-ylidene]ethyl phosphate binding site. Lysine 134 contacts 4-amino-2-methyl-5-(diphosphooxymethyl)pyrimidine. Residue glycine 162 participates in 2-[(2R,5Z)-2-carboxy-4-methylthiazol-5(2H)-ylidene]ethyl phosphate binding.

It belongs to the thiamine-phosphate synthase family. Mg(2+) is required as a cofactor.

It carries out the reaction 2-[(2R,5Z)-2-carboxy-4-methylthiazol-5(2H)-ylidene]ethyl phosphate + 4-amino-2-methyl-5-(diphosphooxymethyl)pyrimidine + 2 H(+) = thiamine phosphate + CO2 + diphosphate. The enzyme catalyses 2-(2-carboxy-4-methylthiazol-5-yl)ethyl phosphate + 4-amino-2-methyl-5-(diphosphooxymethyl)pyrimidine + 2 H(+) = thiamine phosphate + CO2 + diphosphate. The catalysed reaction is 4-methyl-5-(2-phosphooxyethyl)-thiazole + 4-amino-2-methyl-5-(diphosphooxymethyl)pyrimidine + H(+) = thiamine phosphate + diphosphate. It functions in the pathway cofactor biosynthesis; thiamine diphosphate biosynthesis; thiamine phosphate from 4-amino-2-methyl-5-diphosphomethylpyrimidine and 4-methyl-5-(2-phosphoethyl)-thiazole: step 1/1. Condenses 4-methyl-5-(beta-hydroxyethyl)thiazole monophosphate (THZ-P) and 2-methyl-4-amino-5-hydroxymethyl pyrimidine pyrophosphate (HMP-PP) to form thiamine monophosphate (TMP). The chain is Thiamine-phosphate synthase from Chlorobium limicola (strain DSM 245 / NBRC 103803 / 6330).